Reading from the N-terminus, the 768-residue chain is C-type polyheme cytochrome OmcC (768 aa).

The N-terminal stretch at 1-23 (MSRKVTKYSAVLAVSLFAAALAG) is a signal peptide. Cys24 carries N-palmitoyl cysteine lipidation. Cys24 carries S-diacylglycerol cysteine lipidation. 36 residues coordinate heme c: Cys48, Cys51, His52, Cys80, Cys83, His84, Cys112, Cys115, His116, Cys148, Cys151, His152, Cys193, Cys196, His197, Cys238, Cys241, His242, Cys320, Cys323, His324, Cys405, Cys408, His409, Cys454, Cys457, His458, Cys504, Cys507, His508, Cys579, Cys582, His583, Cys611, Cys614, and His615.

Binds 12 heme c groups per subunit.

The protein localises to the cell outer membrane. Its function is as follows. Not involved in Fe(3+) reduction. This Geobacter sulfurreducens (strain ATCC 51573 / DSM 12127 / PCA) protein is C-type polyheme cytochrome OmcC (omcC).